A 106-amino-acid chain; its full sequence is UPF0473 protein SSU98_0068 (106 aa).

This sequence belongs to the UPF0473 family.

This Streptococcus suis (strain 98HAH33) protein is UPF0473 protein SSU98_0068.